The chain runs to 243 residues: Small ribosomal subunit protein uS3 (243 aa).

The 69-residue stretch at Met-39–Arg-107 folds into the KH type-2 domain. Positions Ala-214–Ala-243 are disordered. Residues Ser-229–Ala-243 show a composition bias toward basic and acidic residues.

It belongs to the universal ribosomal protein uS3 family. In terms of assembly, part of the 30S ribosomal subunit. Forms a tight complex with proteins S10 and S14.

In terms of biological role, binds the lower part of the 30S subunit head. Binds mRNA in the 70S ribosome, positioning it for translation. The protein is Small ribosomal subunit protein uS3 of Rhizobium johnstonii (strain DSM 114642 / LMG 32736 / 3841) (Rhizobium leguminosarum bv. viciae).